A 644-amino-acid polypeptide reads, in one-letter code: Macrolide export ATP-binding/permease protein MacB (644 aa).

The ABC transporter domain maps to 4–242; that stretch reads IECKNINRCF…SNVGRIREKA (239 aa). Residue 40 to 47 coordinates ATP; sequence GQSGSGKS. 4 helical membrane passes run 270 to 290, 524 to 544, 574 to 594, and 607 to 627; these read LLTM…VALG, IALI…LVSV, LICI…SLVF, and AASV…FGFM.

The protein belongs to the ABC transporter superfamily. Macrolide exporter (TC 3.A.1.122) family. Homodimer.

Its subcellular location is the cell inner membrane. Non-canonical ABC transporter that contains transmembrane domains (TMD), which form a pore in the inner membrane, and an ATP-binding domain (NBD), which is responsible for energy generation. Confers resistance against macrolides. The sequence is that of Macrolide export ATP-binding/permease protein MacB from Neisseria gonorrhoeae (strain ATCC 700825 / FA 1090).